A 192-amino-acid polypeptide reads, in one-letter code: Probable molybdenum cofactor guanylyltransferase (192 aa).

GTP is bound by residues 8–10 (LAG), Lys20, Asp69, and Asp94. Asp94 lines the Mg(2+) pocket.

It belongs to the MobA family. The cofactor is Mg(2+).

The protein resides in the cytoplasm. The enzyme catalyses Mo-molybdopterin + GTP + H(+) = Mo-molybdopterin guanine dinucleotide + diphosphate. Its function is as follows. Transfers a GMP moiety from GTP to Mo-molybdopterin (Mo-MPT) cofactor (Moco or molybdenum cofactor) to form Mo-molybdopterin guanine dinucleotide (Mo-MGD) cofactor. The chain is Probable molybdenum cofactor guanylyltransferase from Pyrococcus horikoshii (strain ATCC 700860 / DSM 12428 / JCM 9974 / NBRC 100139 / OT-3).